The sequence spans 546 residues: Intermembrane transport protein PqiB (546 aa).

Over 1–15 the chain is Cytoplasmic; that stretch reads MESNNGEAKIQKVKN. The helical transmembrane segment at 16-36 threads the bilayer; sequence WSPVWIFPIVTALIGAWVLFY. The Periplasmic portion of the chain corresponds to 37–546; that stretch reads HYSHQGPEVT…KDPEPKRAKQ (510 aa). MCE/MlaD regions lie at residues 42–133, 158–217, and 285–389; these read GPEV…LQPG, IRVI…NNVR, and HIDY…LDFY. The stretch at 437–464 forms a coiled coil; that stretch reads IEQATSTLSESQRTMKNLQTTLDSMNKI.

The protein belongs to the PqiB family. In terms of assembly, homohexamer. May form a complex composed of PqiA, PqiB and PqiC. Interacts with PqiC.

Its subcellular location is the cell inner membrane. Its function is as follows. Forms a tunnel that spans the entire periplasmic space. Could be implicated in lipid transport between the inner membrane and the outer membrane. Binds phospholipids. Required for outer membrane homeostasis. Contributes to membrane integrity. The polypeptide is Intermembrane transport protein PqiB (Escherichia coli (strain K12)).